Consider the following 109-residue polypeptide: Spermidine export protein MdtI (109 aa).

A run of 4 helical transmembrane segments spans residues 6–26 (LQHILWLLLAIGLEIIANIWL), 36–56 (VYGVASLAAVLAAFSALGQAV), 64–84 (AYALWGGFGIAATVAAGWIMF), and 88–108 (LNRKGWAGLGLLLVGMVIIKL).

It belongs to the drug/metabolite transporter (DMT) superfamily. Small multidrug resistance (SMR) (TC 2.A.7.1) family. MdtI subfamily. As to quaternary structure, forms a complex with MdtJ.

Its subcellular location is the cell inner membrane. Functionally, catalyzes the excretion of spermidine. The sequence is that of Spermidine export protein MdtI (mdtI) from Cronobacter sakazakii (strain ATCC BAA-894) (Enterobacter sakazakii).